The primary structure comprises 482 residues: U2 small nuclear ribonucleoprotein auxiliary factor 35 kDa subunit-related protein 2 (482 aa).

The interval 1–59 (MAAPEKMTFPEKPSHKKYRAALKKEKRKKRRQELARLRDSGLSQKEEEEDTFIEEQQLE) is disordered. Over residues 14 to 31 (SHKKYRAALKKEKRKKRR) the composition is skewed to basic residues. A Glycyl lysine isopeptide (Lys-Gly) (interchain with G-Cter in SUMO2) cross-link involves residue K45. The segment covering 46 to 58 (EEEEDTFIEEQQL) has biased composition (acidic residues). A Glycyl lysine isopeptide (Lys-Gly) (interchain with G-Cter in SUMO2) cross-link involves residue K62. Positions 115 to 135 (QRKEREEEEQKRQEKKEKEEA) are disordered. Residues 166–194 (EKDRANCPFYSKTGACRFGDRCSRKHNFP) form a C3H1-type 1 zinc finger. The RRM domain maps to 198–304 (PTLLIKSMFT…RQLQCEFCPV (107 aa)). A C3H1-type 2 zinc finger spans residues 306 to 333 (RWKMAICGLFEIQQCPRGKHCNFLHVFR). A Phosphoserine modification is found at S349. The tract at residues 351 to 482 (DRTGSSFGKN…DRTVQSPKSK (132 aa)) is disordered. Basic and acidic residues-rich tracts occupy residues 360–375 (NSER…DYYS) and 383–398 (PSPD…SERK). Position 384 is a phosphoserine (S384). A compositionally biased stretch (basic residues) spans 399-412 (SSRHRGKKSHKRTS). Positions 413-435 (KSRERHNSRSRGRNRDRSRDRSR) are enriched in basic and acidic residues. The span at 436–454 (GRGSRSRSRSRSRRSRRSR) shows a compositional bias: basic residues.

As to quaternary structure, component of the U11/U12 snRNPs that are part of the U12-type spliceosome. Interacts (via RS domain) with SRSF1 and SRSF2. Interacts with U2AF2/U2AF65. Post-translationally, phosphorylated in the RS domain by SRPK1. As to expression, widely expressed.

It is found in the nucleus. In terms of biological role, pre-mRNA-binding protein required for splicing of both U2- and U12-type introns. Selectively interacts with the 3'-splice site of U2- and U12-type pre-mRNAs and promotes different steps in U2 and U12 intron splicing. Recruited to U12 pre-mRNAs in an ATP-dependent manner and is required for assembly of the pre-spliceosome, a precursor to other spliceosomal complexes. For U2-type introns, it is selectively and specifically required for the second step of splicing. This is U2 small nuclear ribonucleoprotein auxiliary factor 35 kDa subunit-related protein 2 (ZRSR2) from Homo sapiens (Human).